The following is a 332-amino-acid chain: GTP 3',8-cyclase (332 aa).

Residues 9–220 (RFARKVDYLR…DQVRERIAER (212 aa)) enclose the Radical SAM core domain. Arginine 18 serves as a coordination point for GTP. [4Fe-4S] cluster contacts are provided by cysteine 25 and cysteine 29. Position 31 (tyrosine 31) interacts with S-adenosyl-L-methionine. Cysteine 32 provides a ligand contact to [4Fe-4S] cluster. A GTP-binding site is contributed by arginine 67. Glycine 71 contributes to the S-adenosyl-L-methionine binding site. A GTP-binding site is contributed by threonine 98. An S-adenosyl-L-methionine-binding site is contributed by serine 122. Residue lysine 159 coordinates GTP. An S-adenosyl-L-methionine-binding site is contributed by methionine 193. [4Fe-4S] cluster-binding residues include cysteine 258 and cysteine 261. A GTP-binding site is contributed by 263–265 (RVR). Cysteine 275 contributes to the [4Fe-4S] cluster binding site.

The protein belongs to the radical SAM superfamily. MoaA family. Monomer and homodimer. The cofactor is [4Fe-4S] cluster.

The enzyme catalyses GTP + AH2 + S-adenosyl-L-methionine = (8S)-3',8-cyclo-7,8-dihydroguanosine 5'-triphosphate + 5'-deoxyadenosine + L-methionine + A + H(+). It participates in cofactor biosynthesis; molybdopterin biosynthesis. Catalyzes the cyclization of GTP to (8S)-3',8-cyclo-7,8-dihydroguanosine 5'-triphosphate. This Pseudomonas savastanoi pv. phaseolicola (strain 1448A / Race 6) (Pseudomonas syringae pv. phaseolicola (strain 1448A / Race 6)) protein is GTP 3',8-cyclase.